Consider the following 510-residue polypeptide: Serine/threonine-protein kinase UL13 homolog (510 aa).

The interval 1–63 is disordered; the sequence is MDADDTPPNL…WANPSTATCM (63 aa). Residues 132 to 458 form the Protein kinase domain; that stretch reads RDRPRFAGRG…RRIFQCHAVR (327 aa). Residues 138–146 and lysine 157 contribute to the ATP site; that span reads AGRGTYGRV. Aspartate 257 (proton acceptor) is an active-site residue.

Belongs to the protein kinase superfamily. Ser/Thr protein kinase family. In terms of processing, autophosphorylated.

Its subcellular location is the virion tegument. The protein resides in the host nucleus. The enzyme catalyses L-seryl-[protein] + ATP = O-phospho-L-seryl-[protein] + ADP + H(+). It carries out the reaction L-threonyl-[protein] + ATP = O-phospho-L-threonyl-[protein] + ADP + H(+). In terms of biological role, multifunctional serine/threonine kinase that plays a role in several processes including egress of virus particles from the nucleus, modulation of the actin cytoskeleton and regulation of viral and cellular gene expression. Regulates the nuclear localization of viral envelopment factor proteins 24 and 27, by phosphorylating the protein kinase ORF66, indicating a role in nuclear egress. Disrupts host nuclear lamins, including LMNA and LMNB1. Phosphorylates the viral Fc receptor composed of glycoproteins E (gE) and I (gI). Phosphorylation of glycoprotein E (gE) by UL13 alters its subcellular localization, from the host early endosome to the plasma membrane. Participates in the transcriptional regulation of cellular and viral mRNAs mainly by phosphorylating the viral transcriptional regulator IE63. In Varicella-zoster virus (strain Dumas) (HHV-3), this protein is Serine/threonine-protein kinase UL13 homolog.